The primary structure comprises 1264 residues: Regulator of G-protein signaling 22 (1264 aa).

Residues 565-587 (EEFSLSQPPKSPNKSPEVKTATQ) are disordered. Polar residues predominate over residues 568–578 (SLSQPPKSPNK). 2 consecutive RGS domains span residues 852–980 (KFSD…AARQ) and 1021–1145 (AFRK…TDEN). A coiled-coil region spans residues 1142–1174 (TDENIMSVLERRQEYNKQKKKLAVLEDEKSGKD).

Interacts with GNA11, GNA12 and GNA13. As to expression, testis-specific. Expressed in Leydig cells and spermatogenic cells from the spermatogonia to spermatid stages (at protein level).

The protein resides in the cytoplasm. It is found in the nucleus. Functionally, inhibits signal transduction by increasing the GTPase activity of G protein alpha subunits thereby driving them into their inactive GDP-bound form. In Homo sapiens (Human), this protein is Regulator of G-protein signaling 22 (RGS22).